Here is a 92-residue protein sequence, read N- to C-terminus: MATRLTDTEIQAQLSQFPEWSKVDNKIQRRFKFKNFIEAIDFVNKLVEPAEAADHHPDIEISYNKVTVNLTTHDAGGLTQKDFDLAGTFDQL.

It belongs to the pterin-4-alpha-carbinolamine dehydratase family.

The enzyme catalyses (4aS,6R)-4a-hydroxy-L-erythro-5,6,7,8-tetrahydrobiopterin = (6R)-L-erythro-6,7-dihydrobiopterin + H2O. In Picosynechococcus sp. (strain ATCC 27264 / PCC 7002 / PR-6) (Agmenellum quadruplicatum), this protein is Putative pterin-4-alpha-carbinolamine dehydratase.